The chain runs to 245 residues: Ribonuclease 3 (245 aa).

Residues 17–146 (FAKKMNELGF…FVGALYLDQG (130 aa)) form the RNase III domain. Position 59 (Glu-59) interacts with Mg(2+). Asp-63 is an active-site residue. The Mg(2+) site is built by Asp-132 and Glu-135. Residue Glu-135 is part of the active site. Positions 172–241 (DFKTQFQEYV…AESAYSKLKS (70 aa)) constitute a DRBM domain. Residues 217-245 (ATGQGKTKKESEQKAAESAYSKLKSNNNL) are disordered.

It belongs to the ribonuclease III family. In terms of assembly, homodimer. It depends on Mg(2+) as a cofactor.

It localises to the cytoplasm. The catalysed reaction is Endonucleolytic cleavage to 5'-phosphomonoester.. Functionally, digests double-stranded RNA. Involved in the processing of primary rRNA transcript to yield the immediate precursors to the large and small rRNAs (23S and 16S). Processes some mRNAs, and tRNAs when they are encoded in the rRNA operon. Processes pre-crRNA and tracrRNA of type II CRISPR loci if present in the organism. The polypeptide is Ribonuclease 3 (Staphylococcus haemolyticus (strain JCSC1435)).